We begin with the raw amino-acid sequence, 360 residues long: Nodulin-44 (360 aa).

The signal sequence occupies residues 1-23 (MEEKILMRVIVITVFLFIGAATA). Disordered stretches follow at residues 123–148 (FSPR…VIPL) and 228–249 (FSPR…TLGR).

Belongs to the nodulin 20 family.

This Glycine max (Soybean) protein is Nodulin-44.